The sequence spans 974 residues: Membrane-associated phosphatidylinositol transfer protein 3 (974 aa).

Phosphoserine is present on residues Ser30, Ser31, Ser109, Ser295, Ser298, Ser321, Ser343, and Ser495. The segment at 284 to 304 (GDSPASSSRKGSISSTQDTPV) is disordered. Residues 292–302 (RKGSISSTQDT) are compositionally biased toward polar residues. 2 disordered regions span residues 323 to 346 (IDIS…SDSS) and 491 to 536 (SSRD…SMAP). The DDHD domain occupies 390–594 (FDFDVSDFFL…VAFILRQVMR (205 aa)). Positions 520 to 533 (EGSSHSESSESSDS) are enriched in low complexity. Phosphoserine is present on residues Ser612, Ser907, Ser928, and Ser946. The interval 927 to 974 (MSVQQPDPPAANPKPERAQSQPESDKDHERPLPALSWARGPPKFESVP) is disordered.

Belongs to the PtdIns transfer protein family. PI transfer class IIA subfamily. As to quaternary structure, interacts with PTK2B via its C-terminus. Detected in brain and spleen, and at low levels in ovary.

It localises to the endomembrane system. In terms of biological role, catalyzes the transfer of phosphatidylinositol and phosphatidylcholine between membranes (in vitro). Binds calcium ions. In Homo sapiens (Human), this protein is Membrane-associated phosphatidylinositol transfer protein 3 (PITPNM3).